The primary structure comprises 211 residues: Thymidylate kinase (211 aa).

10–17 contacts ATP; that stretch reads GVEGCGKT.

The protein belongs to the thymidylate kinase family.

The enzyme catalyses dTMP + ATP = dTDP + ADP. Phosphorylation of dTMP to form dTDP in both de novo and salvage pathways of dTTP synthesis. This Trichormus variabilis (strain ATCC 29413 / PCC 7937) (Anabaena variabilis) protein is Thymidylate kinase.